Reading from the N-terminus, the 373-residue chain is Centrosomal protein of 41 kDa (373 aa).

A disordered region spans residues 89–127 (QRLEDNDSATSEPDAEITAKTNGNGSPGEQSPSPVQFIN). Residues S96 and S99 each carry the phosphoserine modification. The span at 107-127 (AKTNGNGSPGEQSPSPVQFIN) shows a compositional bias: polar residues. T109 carries the post-translational modification Phosphothreonine. 2 positions are modified to phosphoserine: S114 and S121. The Rhodanese domain maps to 169–266 (PDCPFLLLDV…LAQKFPEGLI (98 aa)). 2 disordered regions span residues 275–300 (QQAL…ENKW) and 315–373 (EEDQ…KPWK). R343 carries the post-translational modification Omega-N-methylarginine.

Belongs to the CEP41 family. Found in a complex with TTLL6.

The protein resides in the cytoplasm. It localises to the cytoskeleton. Its subcellular location is the microtubule organizing center. The protein localises to the centrosome. It is found in the cell projection. The protein resides in the cilium. It localises to the cilium basal body. In terms of biological role, required during ciliogenesis for tubulin glutamylation in cilium. Probably acts by participating in the transport of TTLL6, a tubulin polyglutamylase, between the basal body and the cilium. This is Centrosomal protein of 41 kDa (CEP41) from Bos taurus (Bovine).